An 861-amino-acid chain; its full sequence is Leucine--tRNA ligase (861 aa).

The short motif at 42 to 52 is the 'HIGH' region element; sequence PYPSGKLHMGH. Positions 619–623 match the 'KMSKS' region motif; that stretch reads KMSKS. Residue K622 coordinates ATP.

The protein belongs to the class-I aminoacyl-tRNA synthetase family.

The protein resides in the cytoplasm. The enzyme catalyses tRNA(Leu) + L-leucine + ATP = L-leucyl-tRNA(Leu) + AMP + diphosphate. The chain is Leucine--tRNA ligase from Actinobacillus pleuropneumoniae serotype 5b (strain L20).